We begin with the raw amino-acid sequence, 301 residues long: RNA polymerase II holoenzyme cyclin-like subunit (301 aa).

The 90-residue stretch at 53-142 (QQLIKLGKRT…LGECEFALIS (90 aa)) folds into the Cyclin N-terminal domain.

It belongs to the cyclin family. Cyclin C subfamily. As to quaternary structure, component of the srb8-11 complex, a regulatory module of the Mediator complex.

Its subcellular location is the nucleus. Functionally, component of the srb8-11 complex. The srb8-11 complex is a regulatory module of the Mediator complex which is itself involved in regulation of basal and activated RNA polymerase II-dependent transcription. The srb8-11 complex may be involved in the transcriptional repression of a subset of genes regulated by Mediator. It may inhibit the association of the Mediator complex with RNA polymerase II to form the holoenzyme complex. The srb8-11 complex phosphorylates the C-terminal domain (CTD) of the largest subunit of RNA polymerase II. This Aspergillus terreus (strain NIH 2624 / FGSC A1156) protein is RNA polymerase II holoenzyme cyclin-like subunit (ssn8).